An 840-amino-acid polypeptide reads, in one-letter code: Exocyst complex component 7 (840 aa).

The segment at 1–112 is disordered; the sequence is MSAPPRLSAR…ATSTTSPFSY (112 aa). The segment covering 19–31 has biased composition (polar residues); the sequence is SNAPSPTSPTGLK. Composition is skewed to low complexity over residues 50-73 and 83-111; these read KSSV…TLPK and QQQQ…SPFS. Residues 193–227 adopt a coiled-coil conformation; that stretch reads KNNATSELTEQDDQLENDKRDLQFIKEQLEKNNSM. Residues 601–638 are disordered; the sequence is QDNNNSNSNSNAPSSTSSNSKSSSSSSSSSSSNSASST. Residues 603 to 637 are compositionally biased toward low complexity; it reads NNNSNSNSNAPSSTSSNSKSSSSSSSSSSSNSASS.

It belongs to the EXO70 family. In terms of assembly, the exocyst complex is composed of sec3/exoc1, sec5/exoc2, sec6/exoc3, sec8/exoc4, sec10/exoc5, sec15/exoc6, exo70/exoc7 and exo84/exoc8.

The protein resides in the cytoplasm. Its subcellular location is the cytosol. The protein localises to the cell membrane. It is found in the midbody. It localises to the midbody ring. Its function is as follows. Component of the exocyst complex involved in the docking of exocytic vesicles with fusion sites on the plasma membrane. The polypeptide is Exocyst complex component 7 (exoc7) (Dictyostelium discoideum (Social amoeba)).